A 100-amino-acid chain; its full sequence is Urease subunit gamma (100 aa).

The protein belongs to the urease gamma subunit family. Heterotrimer of UreA (gamma), UreB (beta) and UreC (alpha) subunits. Three heterotrimers associate to form the active enzyme.

It is found in the cytoplasm. The catalysed reaction is urea + 2 H2O + H(+) = hydrogencarbonate + 2 NH4(+). The protein operates within nitrogen metabolism; urea degradation; CO(2) and NH(3) from urea (urease route): step 1/1. This Delftia acidovorans (strain DSM 14801 / SPH-1) protein is Urease subunit gamma.